Here is a 514-residue protein sequence, read N- to C-terminus: MQQLNPSEISEIIKGRIEKLDVASQARNEGTIVSVSDGIVRIYGLADVMYGEMIEFPGGVYGMALNLEQDSVGAVVLGEYQGLAEGMNAKCTGRILEVPVGPELLGRVVDALGNPIDGKGPIDAKATDAVEKVAPGVIWRKSVDQPVQTGYKSVDAMIPVGRGQRELIIGDRQIGKTALAVDAIINQKDSGIKCVYVAIGQKQSTIANVVRKLEENGALANTIVVAASASESAALQYLAPYSGCTMGEYFRDRGEDALIVYDDLSKQAVAYRQISLLLRRPPGREAYPGDVFYLHSRLLERASRVSEEYVEKFTNGAVTGKTGSLTALPIIETQAGDVSAFVPTNVISITDGQIFLESAMFNSGIRPAVNAGISVSRVGGAAQTKIIKKLSGGIRTALAQYRELAAFAQFASDLDEATRKQLEHGQRVTELMKQKQYAPMSIAEMSLSLYAAERGFLQDVEIAKVGSFEQALISYFQREHAALLAKINEKGDFNDEIDAGIKAGIEKFKATQTW.

170–177 (GDRQIGKT) lines the ATP pocket.

Belongs to the ATPase alpha/beta chains family. F-type ATPases have 2 components, CF(1) - the catalytic core - and CF(0) - the membrane proton channel. CF(1) has five subunits: alpha(3), beta(3), gamma(1), delta(1), epsilon(1). CF(0) has three main subunits: a(1), b(2) and c(9-12). The alpha and beta chains form an alternating ring which encloses part of the gamma chain. CF(1) is attached to CF(0) by a central stalk formed by the gamma and epsilon chains, while a peripheral stalk is formed by the delta and b chains.

It is found in the cell inner membrane. It catalyses the reaction ATP + H2O + 4 H(+)(in) = ADP + phosphate + 5 H(+)(out). Produces ATP from ADP in the presence of a proton gradient across the membrane. The alpha chain is a regulatory subunit. This is ATP synthase subunit alpha from Pseudomonas aeruginosa (strain LESB58).